An 846-amino-acid chain; its full sequence is MTDHGPDALDAFSPPRVGSASPVVISLVSPALTQMTVTPIDNSPKLPFNLAQGLESDLESHSDASNPLHPNVSHPMTRVALGEKAGAENLPVHRTKRRKLGNQRDNTAESMEDLVDCSRNHFQPAEDESTTQKQKTRKPAKPSEKGQKSEKTANLRLRGKVKKASDTQVLVPIDKSAQDPSQKFASQHRADEENGGLHLEEATSRRDYWTPIKDTNSASIDLTGSPVSIQADKAQAKSKDFRELMSEFNFSRETSHEVEAGCQLVNDKPTTKQLLEFMPQNCRTSKSLDSESLDTGTSSTSEGNGKRKQTKKAKRSAKSKITTITSLTTGRYESSLAPEGDHIPSSLVDNMVESIQPAEKAPSNRKNTKPKSKKAIPGRAECYALLKPAPTMEALKTIENQALLFGTSSQLERESSPNVYGLEPELGRDEVKSNSIQNISSEPSTGMGVSRFSKSKNLWGASSRDLDGYLLNVDMIDLVDPTPKITPKPGDERQSNLSNKNTERNIPEESSLLGEQVNAKDVELPDCLAGEISTSDTMQNSFEYLNTTNSQDGPVDDSMPNYDQLSTPELAKKLASFGFRPIKKRERIIELLEKCWESKRKSCIEPTTKPAILSTPQVVIQPIPPNANSKFMDSDSAIKPSSVPPKGTRKPKKITSKEITNPARSSWSTAKNLKSSSKPTDNMPDSMGSQSYVQPEIIEIEDSTDENLLESSKQPRDYRGAHTLASRSASSHITPQISSAPSQTVPIQTRASAGTNEKEIVDLPDIFLQITNAVKAQPRIRSVNGVKQPTWHEKIVMYDPIWLDDLTLWLNVEGFKLIKEDREVHPYLVREWCESKGICCCFRNKK.

Disordered stretches follow at residues 1-20 (MTDH…VGSA), 84-111 (KAGA…AESM), 123-164 (QPAE…VKKA), 283-322 (RTSK…SKIT), 480-513 (DPTP…SSLL), 624-690 (PPNA…MGSQ), and 723-751 (TLAS…QTRA). Positions 141 to 153 (KPSEKGQKSEKTA) are enriched in basic and acidic residues. A compositionally biased stretch (polar residues) spans 293 to 303 (LDTGTSSTSEG). Residues 306–318 (KRKQTKKAKRSAK) show a composition bias toward basic residues. 2 stretches are compositionally biased toward polar residues: residues 657–680 (KEIT…SKPT) and 725–751 (ASRS…QTRA).

The protein belongs to the SLX4 family. Forms a heterodimer with SLX1. In terms of processing, phosphorylated in response to DNA damage.

The protein localises to the nucleus. Its function is as follows. Regulatory subunit of the SLX1-SLX4 structure-specific endonuclease that resolves DNA secondary structures generated during DNA repair and recombination. Has endonuclease activity towards branched DNA substrates, introducing single-strand cuts in duplex DNA close to junctions with ss-DNA. The sequence is that of Structure-specific endonuclease subunit SLX4 from Arthroderma otae (strain ATCC MYA-4605 / CBS 113480) (Microsporum canis).